The sequence spans 279 residues: Arabinooligosaccharides transport system permease protein AraQ (279 aa).

The next 6 membrane-spanning stretches (helical) occupy residues 8–28 (ILSWLLTIGFAFIAFIAVFPL), 79–99 (VWISIVIVVLSLLFSSMVGYA), 110–130 (FFFLLVLIILMIPFEILMLPL), 140–160 (VNTYTAVILPAIVAPIAVFFF), 184–204 (GIFFKIMLPLMGPSLAAMAIL), and 245–265 (ILLAGSVMTIVPIVILFIFFQ). The region spanning 75–264 (FGNSVWISIV…VPIVILFIFF (190 aa)) is the ABC transmembrane type-1 domain.

The protein belongs to the binding-protein-dependent transport system permease family. MalFG subfamily. As to quaternary structure, the complex is composed of two ATP-binding proteins (MsmX), two transmembrane proteins (AraP and AraQ) and a solute-binding protein (AraN).

The protein resides in the cell membrane. Its function is as follows. Part of the ABC transporter complex AraNPQ involved in the uptake of arabinooligosaccharides. Responsible for the translocation of the substrate across the membrane. The chain is Arabinooligosaccharides transport system permease protein AraQ (araQ) from Halalkalibacterium halodurans (strain ATCC BAA-125 / DSM 18197 / FERM 7344 / JCM 9153 / C-125) (Bacillus halodurans).